A 371-amino-acid polypeptide reads, in one-letter code: Glycosyltransferase 8 domain-containing protein 1 (371 aa).

Residues 1 to 7 lie on the Cytoplasmic side of the membrane; it reads MSFRKVN. Residues 8-28 form a helical; Signal-anchor for type II membrane protein membrane-spanning segment; it reads IIIWVLAVVLFLLVLHHNFLS. Topologically, residues 29–371 are lumenal; sequence LSSLLKNDIS…RRHMDTSNIK (343 aa). N257 carries an N-linked (GlcNAc...) asparagine glycan.

This sequence belongs to the glycosyltransferase 8 family.

The protein localises to the membrane. The protein is Glycosyltransferase 8 domain-containing protein 1 (Glt8d1) of Mus musculus (Mouse).